Reading from the N-terminus, the 311-residue chain is Formimidoylglutamase (311 aa).

6 residues coordinate Mn(2+): H130, D155, H157, D159, C242, and D244.

This sequence belongs to the arginase family. Mn(2+) is required as a cofactor.

It catalyses the reaction N-formimidoyl-L-glutamate + H2O = formamide + L-glutamate. It functions in the pathway amino-acid degradation; L-histidine degradation into L-glutamate; L-glutamate from N-formimidoyl-L-glutamate (hydrolase route): step 1/1. Catalyzes the conversion of N-formimidoyl-L-glutamate to L-glutamate and formamide. In Staphylococcus epidermidis (strain ATCC 35984 / DSM 28319 / BCRC 17069 / CCUG 31568 / BM 3577 / RP62A), this protein is Formimidoylglutamase.